The primary structure comprises 523 residues: Katanin p60 ATPase-containing subunit A1 (523 aa).

The segment at 82–215 is disordered; it reads KEAPTGRRAA…DGKSKRGLYE (134 aa). The span at 178-194 shows a compositional bias: low complexity; that stretch reads AGARSSTAGKKGAASKS. 279-286 is an ATP binding site; it reads GPPGTGKT.

Belongs to the AAA ATPase family. Katanin p60 subunit A1 subfamily. May homooligomerize. Component of KTN80-KTN1 complexes composed of a hexamer of KTN1-KTN80 heterodimers that sense microtubule (MT) geometry to confer precise MT severing. Interacts directly with KTN80.1, KTN80.2, KTN80.3 and KTN80.4. Can interact with KTN80.1. May interact with the kinesin related protein KIN14A. Interacts with microtubule polymers. Binds to IPGA1. In terms of tissue distribution, expressed ubiquitously, including siliques, flowers, leaves, stems and roots.

The protein resides in the cytoplasm. It localises to the cytoskeleton. It catalyses the reaction n ATP + n H2O + a microtubule = n ADP + n phosphate + (n+1) alpha/beta tubulin heterodimers.. In terms of biological role, severs microtubules in vitro in an ATP-dependent manner. Required for oligomerization of functional KTN80-KTN1 complexes that catalyze microtubule severing. This activity may promote rapid reorganization of cellular microtubule arrays. May be required for reorientation of cortical microtubule arrays during cellular elongation. Failure to correctly orient these arrays drastically compromises fiber length, cell wall thickness and mechanical strength. May also be required for the spatial organization of developmental cues within the root. Involved in the IPGA1- and AN-dependent regulation of pavement cells morphogenesis leading to puzzle shape. The protein is Katanin p60 ATPase-containing subunit A1 of Arabidopsis thaliana (Mouse-ear cress).